A 91-amino-acid polypeptide reads, in one-letter code: Large ribosomal subunit protein bL31 (91 aa).

The segment at 62-91 is disordered; the sequence is RRKYSGTKPQQTAKGKKAAPKSTPKTNKKG.

The protein belongs to the bacterial ribosomal protein bL31 family. Type A subfamily. In terms of assembly, part of the 50S ribosomal subunit.

In terms of biological role, binds the 23S rRNA. This chain is Large ribosomal subunit protein bL31, found in Thermosynechococcus vestitus (strain NIES-2133 / IAM M-273 / BP-1).